The chain runs to 496 residues: Cytochrome P450 3A30 (496 aa).

Cys-441 serves as a coordination point for heme.

This sequence belongs to the cytochrome P450 family. Heme serves as cofactor. As to expression, highly expressed in liver and intestine. Moderate expression in gill and spleen. Low expression in kidney, brain and heart.

It is found in the endoplasmic reticulum membrane. It localises to the microsome membrane. It catalyses the reaction an organic molecule + reduced [NADPH--hemoprotein reductase] + O2 = an alcohol + oxidized [NADPH--hemoprotein reductase] + H2O + H(+). Putative steroid 6-beta-hydroxylase. The chain is Cytochrome P450 3A30 (cyp3a30) from Fundulus heteroclitus (Killifish).